We begin with the raw amino-acid sequence, 362 residues long: 3-dehydroquinate synthase (362 aa).

Residues 72–77 (DGEQYK), 106–110 (GVVGD), 130–131 (TT), Lys-143, Lys-152, and 170–173 (CLKT) each bind NAD(+). The Zn(2+) site is built by Glu-185, His-248, and His-265.

The protein belongs to the sugar phosphate cyclases superfamily. Dehydroquinate synthase family. Co(2+) is required as a cofactor. Zn(2+) serves as cofactor. Requires NAD(+) as cofactor.

The protein localises to the cytoplasm. The catalysed reaction is 7-phospho-2-dehydro-3-deoxy-D-arabino-heptonate = 3-dehydroquinate + phosphate. It participates in metabolic intermediate biosynthesis; chorismate biosynthesis; chorismate from D-erythrose 4-phosphate and phosphoenolpyruvate: step 2/7. In terms of biological role, catalyzes the conversion of 3-deoxy-D-arabino-heptulosonate 7-phosphate (DAHP) to dehydroquinate (DHQ). The polypeptide is 3-dehydroquinate synthase (Aliivibrio salmonicida (strain LFI1238) (Vibrio salmonicida (strain LFI1238))).